Here is a 406-residue protein sequence, read N- to C-terminus: Peptide transporter imqD (406 aa).

The tract at residues 1-25 (MTAPADSTEKSETSETTTLQTTEVS) is disordered. The span at 14 to 25 (SETTTLQTTEVS) shows a compositional bias: low complexity. The next 6 helical transmembrane spans lie at 184 to 204 (GLVA…LSQA), 220 to 240 (IPND…GPVI), 262 to 282 (ATGF…QKII), 309 to 329 (VFLQ…SFVT), 344 to 364 (AVVQ…GIAI), and 373 to 393 (LIWM…VFWI).

This sequence belongs to the major facilitator superfamily. Proton-dependent oligopeptide transporter (POT/PTR) (TC 2.A.17) family.

The protein resides in the membrane. In terms of biological role, peptide transporter; part of the gene cluster that mediates the biosynthesis of imizoquins A to D, tripeptide-derived alkaloids that serve a protective role against oxidative stress that are essential for normal germination. This chain is Peptide transporter imqD, found in Aspergillus flavus (strain ATCC 200026 / FGSC A1120 / IAM 13836 / NRRL 3357 / JCM 12722 / SRRC 167).